Reading from the N-terminus, the 138-residue chain is Ribulose bisphosphate carboxylase small subunit (138 aa).

Belongs to the RuBisCO small chain family. As to quaternary structure, heterohexadecamer of 8 large and 8 small subunits.

Its subcellular location is the plastid. The protein localises to the chloroplast. Its function is as follows. RuBisCO catalyzes two reactions: the carboxylation of D-ribulose 1,5-bisphosphate, the primary event in carbon dioxide fixation, as well as the oxidative fragmentation of the pentose substrate in the photorespiration process. Both reactions occur simultaneously and in competition at the same active site. Although the small subunit is not catalytic it is essential for maximal activity. This is Ribulose bisphosphate carboxylase small subunit from Porphyra purpurea (Red seaweed).